Here is a 361-residue protein sequence, read N- to C-terminus: Probable U3 small nucleolar RNA-associated protein 11 (361 aa).

Disordered regions lie at residues 1 to 52 (MTKG…KKRK), 200 to 235 (LMSGGHQIKSAAQKRKERREVQEKMRRSGADATPET), 262 to 295 (KRESEATASSSKGAPGDDGEQEEAAAQDEVTRLL), and 311 to 361 (RHVR…RRAR). A compositionally biased stretch (basic residues) spans 17 to 33 (HLKRKTHLERSQPKSRQ). 2 stretches are compositionally biased toward basic and acidic residues: residues 37–46 (QLEKHKDHVL) and 217–228 (RREVQEKMRRSG). Over residues 278 to 287 (DDGEQEEAAA) the composition is skewed to acidic residues. Residues 342-352 (RQMEQRRESRF) show a composition bias toward basic and acidic residues.

It belongs to the UTP11 family. Component of the ribosomal small subunit (SSU) processome.

It is found in the nucleus. It localises to the nucleolus. In terms of biological role, involved in nucleolar processing of pre-18S ribosomal RNA. In Leishmania major, this protein is Probable U3 small nucleolar RNA-associated protein 11.